A 225-amino-acid chain; its full sequence is Octanoyltransferase (225 aa).

Residues 42-219 (KNRQASMIFC…SICSALEYIN (178 aa)) form the BPL/LPL catalytic domain. Residues 79 to 86 (RGGKITWH), 149 to 151 (AIG), and 162 to 164 (GFA) each bind substrate. The active-site Acyl-thioester intermediate is Cys180.

It belongs to the LipB family.

It is found in the cytoplasm. It catalyses the reaction octanoyl-[ACP] + L-lysyl-[protein] = N(6)-octanoyl-L-lysyl-[protein] + holo-[ACP] + H(+). Its pathway is protein modification; protein lipoylation via endogenous pathway; protein N(6)-(lipoyl)lysine from octanoyl-[acyl-carrier-protein]: step 1/2. Its function is as follows. Catalyzes the transfer of endogenously produced octanoic acid from octanoyl-acyl-carrier-protein onto the lipoyl domains of lipoate-dependent enzymes. Lipoyl-ACP can also act as a substrate although octanoyl-ACP is likely to be the physiological substrate. The chain is Octanoyltransferase from Tropheryma whipplei (strain TW08/27) (Whipple's bacillus).